A 257-amino-acid polypeptide reads, in one-letter code: Zinc import ATP-binding protein ZnuC (257 aa).

The ABC transporter domain maps to 6 to 221 (VRLEQITVAF…AFVETFGHQV (216 aa)). 38 to 45 (GPNGAGKT) contributes to the ATP binding site.

The protein belongs to the ABC transporter superfamily. Zinc importer (TC 3.A.1.15.5) family. In terms of assembly, the complex is composed of two ATP-binding proteins (ZnuC), two transmembrane proteins (ZnuB) and a solute-binding protein (ZnuA).

The protein localises to the cell inner membrane. It carries out the reaction Zn(2+)(out) + ATP(in) + H2O(in) = Zn(2+)(in) + ADP(in) + phosphate(in) + H(+)(in). Functionally, part of the ABC transporter complex ZnuABC involved in zinc import. Responsible for energy coupling to the transport system. This Marinobacter nauticus (strain ATCC 700491 / DSM 11845 / VT8) (Marinobacter aquaeolei) protein is Zinc import ATP-binding protein ZnuC.